A 218-amino-acid polypeptide reads, in one-letter code: Thiopurine S-methyltransferase (218 aa).

S-adenosyl-L-methionine contacts are provided by tryptophan 10, leucine 45, glutamate 66, and arginine 123.

It belongs to the class I-like SAM-binding methyltransferase superfamily. TPMT family.

The protein resides in the cytoplasm. It catalyses the reaction S-adenosyl-L-methionine + a thiopurine = S-adenosyl-L-homocysteine + a thiopurine S-methylether.. The polypeptide is Thiopurine S-methyltransferase (Shewanella sp. (strain ANA-3)).